The following is a 212-amino-acid chain: Phosphoribosyl-dephospho-CoA transferase (212 aa).

Catalysis depends on residues aspartate 139 and aspartate 141.

This sequence belongs to the MdcG family.

The enzyme catalyses apo-[malonate decarboxylase ACP] + 2'-(5''-triphospho-alpha-D-ribosyl)-3'-dephospho-CoA = holo-[malonate decarboxylase ACP] + diphosphate. Its function is as follows. Transfers 2'-(5-triphosphoribosyl)-3'-dephosphocoenzyme-A to the apo-[acyl-carrier-protein] of the malonate decarboxylase to yield holo-[acyl-carrier-protein]. This Azotobacter vinelandii (strain DJ / ATCC BAA-1303) protein is Phosphoribosyl-dephospho-CoA transferase.